A 91-amino-acid polypeptide reads, in one-letter code: Conotoxin VnMKLT1-021 (91 aa).

A signal peptide spans Met-1–Ala-22. Residues Asp-23–Arg-57 constitute a propeptide that is removed on maturation. 3 disulfide bridges follow: Cys-59–Cys-78, Cys-66–Cys-82, and Cys-77–Cys-86.

It belongs to the conotoxin O1 superfamily. As to expression, expressed by the venom duct.

The protein resides in the secreted. The chain is Conotoxin VnMKLT1-021 from Conus ventricosus (Mediterranean cone).